The sequence spans 278 residues: Glucosamine-6-phosphate deaminase (278 aa).

Asp-72 serves as the catalytic Proton acceptor; for enolization step. The active-site For ring-opening step is the Asp-141. His-143 serves as the catalytic Proton acceptor; for ring-opening step. Residue Glu-148 is the For ring-opening step of the active site.

The protein belongs to the glucosamine/galactosamine-6-phosphate isomerase family. As to quaternary structure, homohexamer.

The protein localises to the cytoplasm. It catalyses the reaction alpha-D-glucosamine 6-phosphate + H2O = beta-D-fructose 6-phosphate + NH4(+). Its pathway is nucleotide-sugar biosynthesis; UDP-N-acetyl-alpha-D-glucosamine biosynthesis; alpha-D-glucosamine 6-phosphate from D-fructose 6-phosphate: step 1/1. Its function is as follows. Catalyzes the reversible conversion of alpha-D-glucosamine 6-phosphate (GlcN-6P) into beta-D-fructose 6-phosphate (Fru-6P) and ammonium ion, a regulatory reaction step in de novo uridine diphosphate-N-acetyl-alpha-D-glucosamine (UDP-GlcNAc) biosynthesis via hexosamine pathway. This chain is Glucosamine-6-phosphate deaminase (Gnpda1), found in Aedes aegypti (Yellowfever mosquito).